A 252-amino-acid polypeptide reads, in one-letter code: Probable transcriptional regulatory protein Bcav_1989 (252 aa).

It belongs to the TACO1 family.

The protein localises to the cytoplasm. The protein is Probable transcriptional regulatory protein Bcav_1989 of Beutenbergia cavernae (strain ATCC BAA-8 / DSM 12333 / CCUG 43141 / JCM 11478 / NBRC 16432 / NCIMB 13614 / HKI 0122).